The chain runs to 189 residues: Putative biopolymer transport protein ExbB-like 1 (189 aa).

3 helical membrane-spanning segments follow: residues 14-34 (FVTT…LWVF), 99-119 (LVVL…GTVV), and 147-167 (LIAT…YLIL).

It belongs to the ExbB/TolQ family.

The protein resides in the cell inner membrane. This chain is Putative biopolymer transport protein ExbB-like 1, found in Helicobacter pylori (strain J99 / ATCC 700824) (Campylobacter pylori J99).